A 524-amino-acid chain; its full sequence is Peptide chain release factor 3 (524 aa).

Residues 9–275 (QRRRTFAIIS…AVVELSPPPL (267 aa)) enclose the tr-type G domain. GTP contacts are provided by residues 18–25 (SHPDAGKT), 86–90 (DTPGH), and 140–143 (NKLD).

It belongs to the TRAFAC class translation factor GTPase superfamily. Classic translation factor GTPase family. PrfC subfamily.

It is found in the cytoplasm. Increases the formation of ribosomal termination complexes and stimulates activities of RF-1 and RF-2. It binds guanine nucleotides and has strong preference for UGA stop codons. It may interact directly with the ribosome. The stimulation of RF-1 and RF-2 is significantly reduced by GTP and GDP, but not by GMP. The polypeptide is Peptide chain release factor 3 (Methylobacillus flagellatus (strain ATCC 51484 / DSM 6875 / VKM B-1610 / KT)).